The chain runs to 391 residues: Heme A synthase (391 aa).

The next 8 membrane-spanning stretches (helical) occupy residues 37 to 57, 121 to 141, 152 to 172, 186 to 206, 229 to 249, 298 to 318, 332 to 352, and 354 to 374; these read IRLWLMALFLLVMAMIVVGGL, RQLGRVIGLVWAVGFLGFLAA, LLALGALGGLQGGIGWWMVAS, LATHLGLAFIILGLIAWQALL, TTVLIGVAFLQIVLGALVAGI, FLHRMAGYTLAALGLIFWIFG, LLAMALLAQILLGVGTVLSAA, and WQVAIAHQVGAVVIWVLILHA. His300 is a heme binding site. His360 contacts heme.

The protein belongs to the COX15/CtaA family. Type 2 subfamily. In terms of assembly, interacts with CtaB. Heme b serves as cofactor.

The protein resides in the cell membrane. The catalysed reaction is Fe(II)-heme o + 2 A + H2O = Fe(II)-heme a + 2 AH2. It functions in the pathway porphyrin-containing compound metabolism; heme A biosynthesis; heme A from heme O: step 1/1. Functionally, catalyzes the conversion of heme O to heme A by two successive hydroxylations of the methyl group at C8. The first hydroxylation forms heme I, the second hydroxylation results in an unstable dihydroxymethyl group, which spontaneously dehydrates, resulting in the formyl group of heme A. The polypeptide is Heme A synthase (Cereibacter sphaeroides (strain ATCC 17023 / DSM 158 / JCM 6121 / CCUG 31486 / LMG 2827 / NBRC 12203 / NCIMB 8253 / ATH 2.4.1.) (Rhodobacter sphaeroides)).